We begin with the raw amino-acid sequence, 166 residues long: Myosin regulatory light chain 2, ventricular/cardiac muscle isoform (166 aa).

A N,N,N-trimethylserine modification is found at S2. S14, S15, and S19 each carry phosphoserine. EF-hand domains follow at residues 24 to 59 (TQIQ…LGRV), 94 to 129 (DPEE…QAER), and 130 to 165 (FSKE…GEEK). Ca(2+)-binding residues include D37, N39, D41, and D48. Phosphothreonine is present on T52.

In terms of assembly, myosin is a hexamer of 2 heavy chains and 4 light chains. Interacts with MYOC. N-terminus is methylated by METTL11A/NTM1. In terms of processing, phosphorylated by MYLK3 and MYLK2; promotes cardiac muscle contraction and function. Dephosphorylated by PPP1CB complexed to PPP1R12B. The phosphorylated form in adult is expressed as gradients across the heart from endocardium (low phosphorylation) to epicardium (high phosphorylation); regulates cardiac torsion and workload distribution. Abundantly expressed in both cardiac and slow skeletal muscle (soleus), with no detectable expression in fast skeletal muscle (vastus lateralis) or non-muscle tissue.

The protein resides in the cytoplasm. It is found in the myofibril. Its subcellular location is the sarcomere. The protein localises to the a band. Contractile protein that plays a role in heart development and function. Following phosphorylation, plays a role in cross-bridge cycling kinetics and cardiac muscle contraction by increasing myosin lever arm stiffness and promoting myosin head diffusion; as a consequence of the increase in maximum contraction force and calcium sensitivity of contraction force. These events altogether slow down myosin kinetics and prolong duty cycle resulting in accumulated myosins being cooperatively recruited to actin binding sites to sustain thin filament activation as a means to fine-tune myofilament calcium sensitivity to force. During cardiogenesis plays an early role in cardiac contractility by promoting cardiac myofibril assembly. This is Myosin regulatory light chain 2, ventricular/cardiac muscle isoform from Rattus norvegicus (Rat).